Here is a 229-residue protein sequence, read N- to C-terminus: ATP-dependent dethiobiotin synthetase BioD (229 aa).

An ATP-binding site is contributed by Glu-15–Leu-20. Residue Thr-19 coordinates Mg(2+). Lys-40 is a catalytic residue. ATP is bound by residues Asp-57, Glu-118–Gly-121, and Pro-207–Leu-209. Mg(2+) contacts are provided by Asp-57 and Glu-118.

It belongs to the dethiobiotin synthetase family. As to quaternary structure, homodimer. The cofactor is Mg(2+).

It localises to the cytoplasm. It catalyses the reaction (7R,8S)-7,8-diammoniononanoate + CO2 + ATP = (4R,5S)-dethiobiotin + ADP + phosphate + 3 H(+). It functions in the pathway cofactor biosynthesis; biotin biosynthesis; biotin from 7,8-diaminononanoate: step 1/2. In terms of biological role, catalyzes a mechanistically unusual reaction, the ATP-dependent insertion of CO2 between the N7 and N8 nitrogen atoms of 7,8-diaminopelargonic acid (DAPA, also called 7,8-diammoniononanoate) to form a ureido ring. The polypeptide is ATP-dependent dethiobiotin synthetase BioD (Ralstonia nicotianae (strain ATCC BAA-1114 / GMI1000) (Ralstonia solanacearum)).